A 452-amino-acid chain; its full sequence is Probable carboxypeptidase ACLA_088580 (452 aa).

A signal peptide spans 1-18 (MRSLTLLLSLSTALRSVA). Asn-107 and Asn-156 each carry an N-linked (GlcNAc...) asparagine glycan. Asp-175 is a binding site for Zn(2+). The Proton acceptor role is filled by Glu-207. Glu-208 serves as a coordination point for Zn(2+).

This sequence belongs to the peptidase M20A family. It depends on Zn(2+) as a cofactor.

Its subcellular location is the secreted. This chain is Probable carboxypeptidase ACLA_088580, found in Aspergillus clavatus (strain ATCC 1007 / CBS 513.65 / DSM 816 / NCTC 3887 / NRRL 1 / QM 1276 / 107).